We begin with the raw amino-acid sequence, 117 residues long: uncharacterized protein (117 aa).

A signal peptide spans 1 to 23; that stretch reads MVSEAEFMAALAKFAETSATASA.

This is an uncharacterized protein from Archaeoglobus fulgidus (strain ATCC 49558 / DSM 4304 / JCM 9628 / NBRC 100126 / VC-16).